Consider the following 70-residue polypeptide: DNA-directed RNA polymerase subunit omega (70 aa).

It belongs to the RNA polymerase subunit omega family. As to quaternary structure, the RNAP catalytic core consists of 2 alpha, 1 beta, 1 beta' and 1 omega subunit. When a sigma factor is associated with the core the holoenzyme is formed, which can initiate transcription.

The enzyme catalyses RNA(n) + a ribonucleoside 5'-triphosphate = RNA(n+1) + diphosphate. Promotes RNA polymerase assembly. Latches the N- and C-terminal regions of the beta' subunit thereby facilitating its interaction with the beta and alpha subunits. The polypeptide is DNA-directed RNA polymerase subunit omega (Bacillus cereus (strain B4264)).